The following is a 181-amino-acid chain: Large ribosomal subunit protein uL5 (181 aa).

This sequence belongs to the universal ribosomal protein uL5 family. In terms of assembly, part of the 50S ribosomal subunit; part of the 5S rRNA/L5/L18/L25 subcomplex. Contacts the 5S rRNA and the P site tRNA. Forms a bridge to the 30S subunit in the 70S ribosome.

In terms of biological role, this is one of the proteins that bind and probably mediate the attachment of the 5S RNA into the large ribosomal subunit, where it forms part of the central protuberance. In the 70S ribosome it contacts protein S13 of the 30S subunit (bridge B1b), connecting the 2 subunits; this bridge is implicated in subunit movement. Contacts the P site tRNA; the 5S rRNA and some of its associated proteins might help stabilize positioning of ribosome-bound tRNAs. In Thermosipho africanus (strain TCF52B), this protein is Large ribosomal subunit protein uL5.